Consider the following 205-residue polypeptide: Bacterial microcompartment protein trimer-1 (205 aa).

The interval 1 to 20 is disordered; it reads MDHAPERFDATPPAGEPDRP. BMC domains lie at 21 to 106 and 120 to 204; these read ALGV…RFLD and SVII…GRLF.

Belongs to the bacterial microcompartments protein family. In terms of assembly, homotrimerizes to form a pseudohexamer. Unlike its paralogs BMC-T2 and BMC-T3, the pseudohexamers do not stack. The concave side faces outward, with the N- and C-terminii exposed to the cytoplasm.

It is found in the bacterial microcompartment. In terms of biological role, a minor component of the bacterial microcompartment (BMC) shell. Expression of 5 proteins in E.coli (BMC-H (Hoch_5815), BMC-P (Hoch_5814), and 3 BMC-T (Hoch_5812, Hoch_5816, Hoch_3341)) forms 40 nm artificial BMCs with a molecular mass of 6.5 MDa. This protein does not form stacked pseudohexamers in the BMC. There are 20 BMC-T pseudohexamers per BMC, composed of mixed BMC-T1, BMC-T2 and BMC-T3. The shell facets are 20-30 Angstroms thick, with 1 of BMC-T trimers protruding to the exterior. This is Bacterial microcompartment protein trimer-1 from Haliangium ochraceum (strain DSM 14365 / JCM 11303 / SMP-2).